Consider the following 693-residue polypeptide: Elongation factor G (693 aa).

Residues 8 to 284 (HMVRNIGIAA…AVIDYLPAPD (277 aa)) form the tr-type G domain. Residues 17 to 24 (AHIDAGKT), 81 to 85 (DTPGH), and 135 to 138 (NKMD) contribute to the GTP site.

The protein belongs to the TRAFAC class translation factor GTPase superfamily. Classic translation factor GTPase family. EF-G/EF-2 subfamily.

It is found in the cytoplasm. Catalyzes the GTP-dependent ribosomal translocation step during translation elongation. During this step, the ribosome changes from the pre-translocational (PRE) to the post-translocational (POST) state as the newly formed A-site-bound peptidyl-tRNA and P-site-bound deacylated tRNA move to the P and E sites, respectively. Catalyzes the coordinated movement of the two tRNA molecules, the mRNA and conformational changes in the ribosome. The protein is Elongation factor G of Nautilia profundicola (strain ATCC BAA-1463 / DSM 18972 / AmH).